An 81-amino-acid polypeptide reads, in one-letter code: Exodeoxyribonuclease 7 small subunit (81 aa).

Positions 60-70 (LVDKDGNEKAL) are enriched in basic and acidic residues. A disordered region spans residues 60–81 (LVDKDGNEKALDPQNASAPEEE).

This sequence belongs to the XseB family. In terms of assembly, heterooligomer composed of large and small subunits.

It localises to the cytoplasm. The enzyme catalyses Exonucleolytic cleavage in either 5'- to 3'- or 3'- to 5'-direction to yield nucleoside 5'-phosphates.. Its function is as follows. Bidirectionally degrades single-stranded DNA into large acid-insoluble oligonucleotides, which are then degraded further into small acid-soluble oligonucleotides. In Lactobacillus johnsonii (strain CNCM I-12250 / La1 / NCC 533), this protein is Exodeoxyribonuclease 7 small subunit.